The primary structure comprises 418 residues: N-acetylglucosamine-6-phosphate deacetylase (418 aa).

Glu-154 lines the a divalent metal cation pocket. 165–166 lines the substrate pocket; sequence CH. Residues His-223 and His-244 each contribute to the a divalent metal cation site. Substrate contacts are provided by residues 247-248, Arg-255, and 281-284; these read NA and DGIH. Asp-306 (proton donor/acceptor) is an active-site residue. 340 to 342 is a binding site for substrate; it reads TAG.

Belongs to the metallo-dependent hydrolases superfamily. NagA family. Requires a divalent metal cation as cofactor.

It carries out the reaction N-acetyl-D-glucosamine 6-phosphate + H2O = D-glucosamine 6-phosphate + acetate. In Caenorhabditis elegans, this protein is N-acetylglucosamine-6-phosphate deacetylase.